The chain runs to 46 residues: Mu-segestritoxin-Sf1d (46 aa).

Disulfide bonds link Cys3–Cys19, Cys10–Cys22, Cys18–Cys42, and Cys24–Cys40. Residues 31-33 (RPW) form a keys region for toxin activity region.

Belongs to the neurotoxin 16 (SFI) family. As to expression, expressed by the venom gland.

It localises to the secreted. Insecticidal toxin. It inhibits insect voltage-gated sodium channels (Nav) by partially blocking the channel pore in DUM neurons from the American cockroach, not by acting as a gating modifier. The inhibition is only partially reversible after prolonged washout. In vivo, the toxin causes flaccid paralysis followed by death when injected into Heliothis virescens larvae. It also causes uncoordinated movements followed by full paralysis to sheep blowflies (Lucilia cuprina). When the toxin is fused to snowdrop lectin, it is orally active against larvae of the tomato moth (Laconobia oleracea), the rice brown planthopper (Nilaparvata lugens), and the peach-potato aphid (Myzus persicae). This Segestria florentina (Tube-web spider) protein is Mu-segestritoxin-Sf1d.